A 1020-amino-acid chain; its full sequence is Nucleotide-binding oligomerization domain-containing protein 2 (1020 aa).

2 consecutive CARD domains span residues 6–104 (CDMC…GSWD) and 106–200 (HSLH…AECQ). An ATG16L1-binding motif motif is present at residues 43 to 57 (WDVLSREDYEGLSLP). Residues Thr219, Tyr232, Thr233, Gly282, Ser283, Gly284, Lys285, Ser286, and Thr287 each contribute to the ADP site. The required for CARD9 binding stretch occupies residues 221–254 (DGSENLCLEDIYTENILELQTEVGTAGALQKSPA). Residues 273–600 (DTILVVGEAG…AAFYLAVSAD (328 aa)) form the NACHT domain. The S-palmitoyl cysteine moiety is linked to residue Cys375. His583 lines the ADP pocket. 10 LRR repeats span residues 685–709 (ARAR…VPGE), 726–749 (LYEM…HLKL), 766–792 (LQHL…QLRP), 794–817 (LGVC…TLVE), 822–845 (CEQL…SMAK), 850–873 (KQNF…VLAQ), 906–929 (HQNL…ALAL), 934–962 (NKSL…LKRN), 963–985 (STLK…ALLQ), and 1005–1019 (LEEI…ARLL).

Belongs to the NOD1-NOD2 family. In terms of assembly, homooligomer: homooligomerizes following muramyl dipeptide (MDP)-binding, promoting RIPK2 recruitment. Interacts (via CARD domain) with RIPK2 (via CARD domain). Following RIPK2 recruitment, RIPK2 homooligomerizes via its CARD domain and forms long filaments named RIPosomes. Interacts (via CARD domain) with ubiquitin; inhibiting interaction with RIPK2. Component of a signaling complex consisting of ARHGEF2, NOD2 and RIPK2. Interacts with ANKRD17 (via N-terminus). Interacts with HSPA1A; the interaction enhances NOD2 stability. Interacts (via both CARD domains) with HSP90; the interaction enhances NOD2 stability. Interacts (via CARD domain) with SOCS3; the interaction promotes NOD2 degradation. Interacts (via CARD domain) with ERBIN; the interaction inhibits activation of NOD2. Interacts with MAPKBP1; the interaction is enhanced in the presence of muramyl dipeptide (MDP) and inhibits NOD2 homooligomerization and activation. Interacts with INAVA; the interaction takes place upon Pattern recognition receptor (PRR) stimulation. Interacts (via NACHT domain) with CARD9. Interacts (via CARD domain) with CASP1; this interaction leads to IL1B processing. Also interacts with CASP4. Interacts with NLRP1; this interaction is enhanced in the presence of muramyl dipeptide (MDP) and leads to increased IL1B release. Interacts with NLRP12; this interaction promotes degradation of NOD2 through the ubiquitin-proteasome pathway. Interacts with ANKHD1, C10orf67, CHMP5, DOCK7, ENTR1, KRT15, LDOC1, PPP1R12C, PPP2R3B, TRIM41 and VIM. Interacts with MAVS; interaction takes place following single-stranded RNA (ssRNA)-binding. Interacts with ATG16L1. Interacts with Irgm1; promoting Irgm1 'Lys-63'-linked polyubiquitination, which is required for interactions with the core autophagy factors. In terms of processing, palmitoylated by ZDHHC5; palmitoylation is required for proper recruitment to the bacterial entry site and hence for proper signaling upon cognate peptidoglycan detection. Palmitoylation promotes localization to the cell membrane. Palmitoylation protects from SQSTM1/p62-dependent autophagic degradation. Polyubiquitinated by TRIM27, leading to proteasome-mediated degradation. Polyubiquitinated and degraded following muramyl dipeptide (MDP) stimulation, conferring MDP tolerance and preventing septic shock. Post-translationally, degraded via selective autophagy following interaction with Irgm1. Irgm1 promotes NOD2-RIPK2 RIPosome recruitment to autophagosome membranes, promoting their SQSTM1/p62-dependent autophagic degradation. In terms of processing, O-glycosylated by OGT, O-GlcNAcylation increases protein stability. As to expression, expressed in monocytes, macrophages, dendritic cells, hepatocytes, preadipocytes, epithelial cells of oral cavity, lung and intestine. In intestine, highly expressed in ileal Paneth cells of the crypt and in intestinal stem cells. Also expressed in neurons of several brain regions including the hypothalamus.

It localises to the cell membrane. Its subcellular location is the basolateral cell membrane. The protein localises to the cytoplasm. The protein resides in the mitochondrion. Its activity is regulated as follows. ADP-binding promotes an inactive closed conformation. Functionally, pattern recognition receptor (PRR) that detects bacterial peptidoglycan fragments and other danger signals and plays an important role in gastrointestinal immunity. Specifically activated by muramyl dipeptide (MDP), a fragment of bacterial peptidoglycan found in every bacterial peptidoglycan type. NOD2 specifically recognizes and binds 6-O-phospho-MDP, the phosphorylated form of MDP, which is generated by NAGK. 6-O-phospho-MDP-binding triggers oligomerization that facilitates the binding and subsequent activation of the proximal adapter receptor-interacting RIPK2. Following recruitment, RIPK2 undergoes 'Met-1'- (linear) and 'Lys-63'-linked polyubiquitination by E3 ubiquitin-protein ligases XIAP, BIRC2, BIRC3 and the LUBAC complex, becoming a scaffolding protein for downstream effectors, triggering activation of the NF-kappa-B and MAP kinases signaling. This in turn leads to the transcriptional activation of hundreds of genes involved in immune response. Its ability to detect bacterial MDP plays a central role in maintaining the equilibrium between intestinal microbiota and host immune responses to control inflammation. An imbalance in this relationship results in dysbiosis, whereby pathogenic bacteria prevail on commensals, causing damage in the intestinal epithelial barrier as well as allowing bacterial invasion and inflammation. Acts as a regulator of appetite by sensing MDP in a subset of brain neurons: microbiota-derived MDP reach the brain, where they bind and activate NOD2 in inhibitory hypothalamic neurons, decreasing neuronal activity, thereby regulating satiety and body temperature. NOD2-dependent MDP-sensing of bacterial cell walls in the intestinal epithelial compartment contributes to sustained postnatal growth upon undernutrition. Also plays a role in antiviral response by acting as a sensor of single-stranded RNA (ssRNA) from viruses: upon ssRNA-binding, interacts with MAVS, leading to activation of interferon regulatory factor-3/IRF3 and expression of type I interferon. Also acts as a regulator of autophagy in dendritic cells via its interaction with ATG16L1, possibly by recruiting ATG16L1 at the site of bacterial entry. NOD2 activation in the small intestine crypt also contributes to intestinal stem cells survival and function: acts by promoting mitophagy via its association with ATG16L1. In addition to its main role in innate immunity, also regulates the adaptive immune system by acting as regulator of helper T-cell and regulatory T-cells (Tregs). Besides recognizing pathogens, also involved in the endoplasmic reticulum stress response: acts by sensing and binding to the cytosolic metabolite sphingosine-1-phosphate generated in response to endoplasmic reticulum stress, initiating an inflammation process that leads to activation of the NF-kappa-B and MAP kinases signaling. May also be involved in NLRP1 activation following activation by MDP, leading to CASP1 activation and IL1B release in macrophages. In Mus musculus (Mouse), this protein is Nucleotide-binding oligomerization domain-containing protein 2.